We begin with the raw amino-acid sequence, 472 residues long: Transcription factor TGAL1 (472 aa).

Positions 136–190 (WGESTIADTSPRTDTSTDPDTDERNQMFEQGQLAAPTASDSSDRSKDKLDHKTLR) are disordered. Residues 143-153 (DTSPRTDTSTD) are compositionally biased toward low complexity. Residues 176 to 187 (SSDRSKDKLDHK) show a composition bias toward basic and acidic residues. A bZIP domain is found at 185 to 229 (DHKTLRRLAQNREAARKSRLRKKAYIQNLESSRLKLTQIEQELQR). Positions 187–207 (KTLRRLAQNREAARKSRLRKK) are basic motif. Residues 213–227 (LESSRLKLTQIEQEL) form a leucine-zipper region. In terms of domain architecture, DOG1 spans 252-469 (ALAFDMEYAR…RALSSLWLAR (218 aa)).

It belongs to the bZIP family. As to quaternary structure, isoforms 1 and 2 interact with NPR2/NH2. Isoform 2 interacts with NPR1/NH1 and NPR3/NH3.

The protein resides in the nucleus. Functionally, transcriptional regulator involved in defense response. The sequence is that of Transcription factor TGAL1 from Oryza sativa subsp. japonica (Rice).